We begin with the raw amino-acid sequence, 216 residues long: PEP-dependent dihydroxyacetone kinase 2, ADP-binding subunit DhaL (216 aa).

The DhaL domain occupies A9–E210. Mg(2+) contacts are provided by D33, D38, and D40. Residues H41–N44, A84–S85, G126, M135, R182, and D195–G197 contribute to the ADP site.

As to quaternary structure, homodimer. The dihydroxyacetone kinase complex is composed of a homodimer of DhaM, a homodimer of DhaK and the subunit DhaL. The cofactor is Mg(2+).

The protein localises to the cytoplasm. It catalyses the reaction dihydroxyacetone + phosphoenolpyruvate = dihydroxyacetone phosphate + pyruvate. It functions in the pathway polyol metabolism; glycerol degradation. Its function is as follows. ADP-binding subunit of the dihydroxyacetone kinase, which is responsible for the phosphoenolpyruvate (PEP)-dependent phosphorylation of dihydroxyacetone. DhaL-ADP is converted to DhaL-ATP via a phosphoryl group transfer from DhaM and transmits it to dihydroxyacetone binds to DhaK. This is PEP-dependent dihydroxyacetone kinase 2, ADP-binding subunit DhaL from Listeria innocua serovar 6a (strain ATCC BAA-680 / CLIP 11262).